The chain runs to 112 residues: UPF0235 protein Atu2660 (112 aa).

The protein belongs to the UPF0235 family.

This Agrobacterium fabrum (strain C58 / ATCC 33970) (Agrobacterium tumefaciens (strain C58)) protein is UPF0235 protein Atu2660.